The primary structure comprises 317 residues: Hps1-dma1 cluster cytochrome P450 monooxygenase cyp3.1 (317 aa).

Residues 183–205 form a disordered region; sequence PAIETDRKTSSHSRSPTALADKQ. Cys-260 lines the heme pocket.

This sequence belongs to the cytochrome P450 family. Requires heme as cofactor.

It functions in the pathway secondary metabolite biosynthesis. Functionally, cytochrome P450 monooxygenase; part of the hps1-dma1 gene cluster that probably mediates the biosynthesis a derivative of cyclopiazonic acid (CPA). The hybrid polyketide synthase-nonribosomal peptide synthetase (PKS-NRPS) nps1 might incorporates acetyl-CoA, malonyl-CoA, and tryptophan (Trp) and utilizes a C-terminal redox-incompetent reductase domain to make and release the tryptophan tetramic acid, cyclo-acetoacetyl-L-tryptophan (c-AATrp), as the first intermediate in the pathway. In addition, the cluster also includes the tryptophan dimethylallyltransferase dma1, the FAD-dependent oxidoreductase toxD, the cytochrome P450 monooxygenase cyp3.1 and the methyltransferase DOTSEDRAFT_139328; the latter 2 being not present in all CPA-producing fungi but involved in additional modifications that occur in biosynthesis the of a range of CPA and CPA-like products. Further studies are required to clarify whether the CPA-like hps1-dma1 cluster is functional or a non-functional relic reflecting evolution of D.septosporum. The protein is Hps1-dma1 cluster cytochrome P450 monooxygenase cyp3.1 (cyp3.1) of Dothistroma septosporum (strain NZE10 / CBS 128990) (Red band needle blight fungus).